Here is a 244-residue protein sequence, read N- to C-terminus: DNA repair protein RecO (244 aa).

It belongs to the RecO family.

Involved in DNA repair and RecF pathway recombination. The protein is DNA repair protein RecO of Ehrlichia chaffeensis (strain ATCC CRL-10679 / Arkansas).